A 302-amino-acid chain; its full sequence is Sulfotransferase 1C4 (302 aa).

55–60 (KAGTTW) is a 3'-phosphoadenylyl sulfate binding site. Position 113–115 (113–115 (KTH)) interacts with substrate. The active-site Proton acceptor is His-115. 3'-phosphoadenylyl sulfate is bound by residues Arg-137, Ser-145, Tyr-200, 234 to 239 (TSFDVM), and 262 to 266 (FMRKG).

This sequence belongs to the sulfotransferase 1 family. In terms of tissue distribution, expressed in liver, kidney and jejunum.

The protein resides in the cytoplasm. It is found in the cytosol. It catalyses the reaction a phenol + 3'-phosphoadenylyl sulfate = an aryl sulfate + adenosine 3',5'-bisphosphate + H(+). It carries out the reaction 17beta-estradiol + 3'-phosphoadenylyl sulfate = 17beta-estradiol 3-sulfate + adenosine 3',5'-bisphosphate + H(+). The enzyme catalyses bisphenol A + 3'-phosphoadenylyl sulfate = bisphenyl A sulfate + adenosine 3',5'-bisphosphate + H(+). Functionally, sulfotransferase that utilizes 3'-phospho-5'-adenylyl sulfate (PAPS) as sulfonate donor to catalyze the sulfate conjugation of phenolic compounds and estrogen (E2). Can also sulfonate estrogenic compounds, however, the dietary flavonoids (phytoestrogen) and environmental estrogens, like bisphenol A are better substrates than 17beta-estradiol (E2). The protein is Sulfotransferase 1C4 (SULT1C4) of Macaca fascicularis (Crab-eating macaque).